The primary structure comprises 393 residues: SEC12-like protein 2 (393 aa).

Ala2 is modified (N-acetylalanine). Residues 2–367 lie on the Cytoplasmic side of the membrane; the sequence is ANQSTETNQP…EQKGDKPGVR (366 aa). Residues 41–67 form a disordered region; that stretch reads EKSEDDDESSSSSSSSRSCIVLSGGGG. At Ser43 the chain carries Phosphoserine. 4 WD repeats span residues 151 to 190, 193 to 231, 283 to 322, and 326 to 367; these read RDVG…TLLN, QAHS…AVAS, IKKN…TIQV, and AHLG…PGVR. Residues 368-388 form a helical; Signal-anchor for type II membrane protein membrane-spanning segment; it reads WWLLVLLIVLLYVVAYYYMKA. Residues 389–393 lie on the Lumenal side of the membrane; sequence KGIIP.

In terms of assembly, interacts with BZIP28.

It is found in the endoplasmic reticulum membrane. Its subcellular location is the golgi apparatus. The protein localises to the cis-Golgi network membrane. Functionally, required for the formation or budding of transport vesicles from the ER. The sequence is that of SEC12-like protein 2 (STL2P) from Arabidopsis thaliana (Mouse-ear cress).